Reading from the N-terminus, the 178-residue chain is Caveolin-1 (178 aa).

Ser2 is modified (N-acetylserine). At Ser2 the chain carries Phosphoserine. The interval 2–94 is required for homooligomerization; sequence SGGKYVDSEG…WKASFTTFTV (93 aa). Residues 2-104 are Cytoplasmic-facing; that stretch reads SGGKYVDSEG…TKYWFYRLLS (103 aa). Lys5 bears the N6-acetyllysine; alternate mark. Lys5 participates in a covalent cross-link: Glycyl lysine isopeptide (Lys-Gly) (interchain with G-Cter in ubiquitin); alternate. Tyr6 carries the phosphotyrosine modification. A Phosphoserine modification is found at Ser9. Tyr14 is modified (phosphotyrosine; by ABL1). Tyr25 is modified (phosphotyrosine). Residues Lys26, Lys30, Lys39, Lys47, and Lys57 each participate in a glycyl lysine isopeptide (Lys-Gly) (interchain with G-Cter in ubiquitin) cross-link. The interval 82–94 is interaction with CAVIN3; it reads DGIWKASFTTFTV. An intramembrane region (helical) is located at residues 105–125; it reads GIFGIPMALIWGVYFAILSFL. The Cytoplasmic segment spans residues 126–178; the sequence is HIWAVVPCIKSFLIEIQCISRVYSIYVHTFCDPLFEAIGKIFSNIRISTQKEI. Residues 131 to 142 form an interacts with SPRY1, SPRY2, SPRY3 and SPRY4 region; it reads VPCIKSFLIEIQ. 3 S-palmitoyl cysteine lipidation sites follow: Cys133, Cys143, and Cys156. Positions 149–160 are interacts with SPRY1, SPRY2, and SPRY4; the sequence is SIYVHTFCDPLF. Residues 167–178 form an interacts with SPRY1, SPRY2, SPRY3 and SPRY4 region; that stretch reads FSNIRISTQKEI.

The protein belongs to the caveolin family. In terms of assembly, homooligomer. Interacts with GLIPR2. Interacts with NOSTRIN. Interacts with SNAP25 and STX1A. Interacts (via the N-terminus) with DPP4; the interaction is direct. Interacts with CTNNB1, CDH1 and JUP. Interacts with PACSIN2; this interaction induces membrane tubulation. Interacts with SLC7A9. Interacts with BMX and BTK. Interacts with TGFBR1. Interacts with CAVIN3 (via leucine-zipper domain) in a cholesterol-sensitive manner. Interacts with CAVIN1. Interacts with EHD2 in a cholesterol-dependent manner. Forms a ternary complex with UBXN6 and VCP; mediates CAV1 targeting to lysosomes for degradation. Interacts with ABCG1; this interaction regulates ABCG1-mediated cholesterol efflux. Interacts with NEU3; this interaction enhances NEU3 sialidase activity within caveola. Interacts (via C-terminus) with SPRY1, SPRY2 (via C-terminus), SPRY3, and SPRY4. Interacts with IGFBP5; this interaction allows trafficking of IGFBP5 from the plasma membrane to the nucleus. Phosphorylated at Tyr-14 by ABL1 in response to oxidative stress. Post-translationally, ubiquitinated. Undergo monoubiquitination and multi- and/or polyubiquitination. Monoubiquitination of N-terminal lysines promotes integration in a ternary complex with UBXN6 and VCP which promotes oligomeric CAV1 targeting to lysosomes for degradation. Ubiquitinated by ZNRF1; leading to degradation and modulation of the TLR4-mediated immune response.

It is found in the golgi apparatus membrane. The protein localises to the cell membrane. The protein resides in the membrane. Its subcellular location is the caveola. It localises to the membrane raft. Its function is as follows. May act as a scaffolding protein within caveolar membranes. Forms a stable heterooligomeric complex with CAV2 that targets to lipid rafts and drives caveolae formation. Mediates the recruitment of CAVIN proteins (CAVIN1/2/3/4) to the caveolae. Interacts directly with G-protein alpha subunits and can functionally regulate their activity. Involved in the costimulatory signal essential for T-cell receptor (TCR)-mediated T-cell activation. Its binding to DPP4 induces T-cell proliferation and NF-kappa-B activation in a T-cell receptor/CD3-dependent manner. Recruits CTNNB1 to caveolar membranes and may regulate CTNNB1-mediated signaling through the Wnt pathway. Negatively regulates TGFB1-mediated activation of SMAD2/3 by mediating the internalization of TGFBR1 from membrane rafts leading to its subsequent degradation. Binds 20(S)-hydroxycholesterol (20(S)-OHC). This is Caveolin-1 (CAV1) from Echinops telfairi (Lesser hedgehog tenrec).